Reading from the N-terminus, the 518-residue chain is Mitochondrial distribution and morphology protein 34 (518 aa).

In terms of domain architecture, SMP-LTD spans M1–L198. Disordered stretches follow at residues S335–S369 and I491–V518. Basic residues predominate over residues R336–S350. Positions P492–T506 are enriched in basic and acidic residues.

It belongs to the MDM34 family. As to quaternary structure, component of the ER-mitochondria encounter structure (ERMES) or MDM complex, composed of MMM1, MDM10, MDM12 and MDM34.

The protein resides in the mitochondrion outer membrane. Its function is as follows. Component of the ERMES/MDM complex, which serves as a molecular tether to connect the endoplasmic reticulum (ER) and mitochondria. Components of this complex are involved in the control of mitochondrial shape and protein biogenesis, and function in nonvesicular lipid trafficking between the ER and mitochondria. MDM34 is required for the interaction of the ER-resident membrane protein MMM1 and the outer mitochondrial membrane-resident beta-barrel protein MDM10. The protein is Mitochondrial distribution and morphology protein 34 of Meyerozyma guilliermondii (strain ATCC 6260 / CBS 566 / DSM 6381 / JCM 1539 / NBRC 10279 / NRRL Y-324) (Yeast).